The chain runs to 778 residues: High affinity nerve growth factor receptor (778 aa).

A signal peptide spans 1 to 14 (WGCLRLPLPLCHAL). The Extracellular portion of the chain corresponds to 15 to 400 (AAHCRCPASH…VETADEHTFG (386 aa)). Cys18 and Cys20 are joined by a disulfide. LRR repeat units lie at residues 71–92 (DLRH…AFQD) and 95–116 (RLSH…TFQH). Residues Asn100, Asn130, Asn143, Asn151, Asn194, Asn234, Asn262, Asn300, Asn320, Asn340, and Asn384 are each glycosylated (N-linked (GlcNAc...) asparagine). In terms of domain architecture, LRRCT spans 127–175 (NPFNCSCGIRWLQLWQNGSRAELGNQSLLCWEGSMLVALDSHPLHDCEP). Cys133 and Cys173 form a disulfide bridge. Ig-like C2-type domains follow at residues 175–262 (PPTA…VMLN) and 281–347 (WCIP…VVQN). A disulfide bond links Cys282 and Cys327. The helical transmembrane segment at 401–421 (VSVAVALAVFASLFLSVMLIA) threads the bilayer. Topologically, residues 422 to 778 (LNKCGHRSKF…TPPIYLDILG (357 aa)) are cytoplasmic. Tyr479 carries the phosphotyrosine; by autocatalysis modification. Residues 493-763 (IVLKWELGEG…RSIQDIHSRL (271 aa)) enclose the Protein kinase domain. ATP-binding positions include 499-507 (LGEGAFGKV) and Lys527. Catalysis depends on Asp633, which acts as the Proton acceptor. 4 positions are modified to phosphotyrosine; by autocatalysis: Tyr659, Tyr663, Tyr664, and Tyr773.

The protein belongs to the protein kinase superfamily. Tyr protein kinase family. Insulin receptor subfamily. In terms of assembly, exists in a dynamic equilibrium between monomeric (low affinity) and dimeric (high affinity) structures. Homodimerization is induced by NGF dimer binding. Interacts with PTPRS. Ligand-mediated auto-phosphorylation. Post-translationally, ubiquitinated. Undergoes polyubiquitination upon activation; regulated by NGFR. Ubiquitination regulates the internalization of the receptor.

It localises to the cell membrane. It is found in the early endosome membrane. The protein resides in the late endosome membrane. Its subcellular location is the recycling endosome membrane. The enzyme catalyses L-tyrosyl-[protein] + ATP = O-phospho-L-tyrosyl-[protein] + ADP + H(+). The pro-survival signaling effect of NTRK1 in neurons requires its endocytosis into signaling early endosomes and its retrograde axonal transport. In terms of biological role, receptor tyrosine kinase involved in the development and the maturation of the central and peripheral nervous systems through regulation of proliferation, differentiation and survival of sympathetic and nervous neurons. High affinity receptor for NGF which is its primary ligand, it can also bind and be activated by NTF3/neurotrophin-3. Upon dimeric NGF ligand-binding, undergoes homodimerization, autophosphorylation and activation. Recruits, phosphorylates and/or activates several downstream effectors that regulate distinct overlapping signaling cascades driving cell survival and differentiation. In absence of ligand and activation, may promote cell death, making the survival of neurons dependent on trophic factors. The chain is High affinity nerve growth factor receptor (NTRK1) from Gallus gallus (Chicken).